Here is a 431-residue protein sequence, read N- to C-terminus: DNA polymerase delta subunit 2 (431 aa).

This sequence belongs to the DNA polymerase delta/II small subunit family. In terms of assembly, component of both the DNA polymerase delta and DNA polymerase zeta complexes. The DNA polymerase delta complex consisting of three subunits: the catalytic subunit PolD1 and two accessory subunits PolD2/Pol31 and PolD3/Pol32. Within the delta complex, interacts with both PolD1 and PolD3, and is able to interact with PolD1 in the absence of PolD3. Component of the DNA polymerase zeta complex consisting of four subunits: the catalytic subunit PolZ1 and three accessory subunits PolZ2/Rev7, PolD2/Pol31 and PolD3/Pol32. As to expression, expressed in ovaries and embryos (at the protein level).

It localises to the nucleus. The protein resides in the nucleoplasm. Functionally, accessory component of both the DNA polymerase delta complex and possibly the DNA polymerase zeta complex. As a component of the delta complex, participates in high fidelity genome replication, including lagging strand synthesis, DNA recombination and repair. Appears to promote the function of the DNA pol-delta complex accessory subunit PolD3 in both embryonic and postembryonic somatic cells. The sequence is that of DNA polymerase delta subunit 2 from Drosophila melanogaster (Fruit fly).